A 683-amino-acid chain; its full sequence is DNA ligase (683 aa).

NAD(+) contacts are provided by residues 44 to 48 (DAEYD), 93 to 94 (SL), and E127. K129 acts as the N6-AMP-lysine intermediate in catalysis. Residues R150, E187, K302, and K326 each coordinate NAD(+). Zn(2+) is bound by residues C420, C423, C438, and C444. The BRCT domain maps to 601–683 (RVGGRLAGLT…SKLLATGGNQ (83 aa)).

This sequence belongs to the NAD-dependent DNA ligase family. LigA subfamily. Mg(2+) serves as cofactor. Mn(2+) is required as a cofactor.

The enzyme catalyses NAD(+) + (deoxyribonucleotide)n-3'-hydroxyl + 5'-phospho-(deoxyribonucleotide)m = (deoxyribonucleotide)n+m + AMP + beta-nicotinamide D-nucleotide.. Functionally, DNA ligase that catalyzes the formation of phosphodiester linkages between 5'-phosphoryl and 3'-hydroxyl groups in double-stranded DNA using NAD as a coenzyme and as the energy source for the reaction. It is essential for DNA replication and repair of damaged DNA. In Trichlorobacter lovleyi (strain ATCC BAA-1151 / DSM 17278 / SZ) (Geobacter lovleyi), this protein is DNA ligase.